The chain runs to 243 residues: Pyridoxine 5'-phosphate synthase (243 aa).

Asn9 contacts 3-amino-2-oxopropyl phosphate. A 1-deoxy-D-xylulose 5-phosphate-binding site is contributed by 11–12; that stretch reads DH. Arg20 contacts 3-amino-2-oxopropyl phosphate. The Proton acceptor role is filled by His45. 1-deoxy-D-xylulose 5-phosphate-binding residues include Arg47 and His52. The active-site Proton acceptor is Glu72. Position 102 (Thr102) interacts with 1-deoxy-D-xylulose 5-phosphate. Residue His193 is the Proton donor of the active site. 3-amino-2-oxopropyl phosphate is bound by residues Gly194 and 215–216; that span reads GH.

Belongs to the PNP synthase family. As to quaternary structure, homooctamer; tetramer of dimers.

The protein localises to the cytoplasm. The enzyme catalyses 3-amino-2-oxopropyl phosphate + 1-deoxy-D-xylulose 5-phosphate = pyridoxine 5'-phosphate + phosphate + 2 H2O + H(+). The protein operates within cofactor biosynthesis; pyridoxine 5'-phosphate biosynthesis; pyridoxine 5'-phosphate from D-erythrose 4-phosphate: step 5/5. Its function is as follows. Catalyzes the complicated ring closure reaction between the two acyclic compounds 1-deoxy-D-xylulose-5-phosphate (DXP) and 3-amino-2-oxopropyl phosphate (1-amino-acetone-3-phosphate or AAP) to form pyridoxine 5'-phosphate (PNP) and inorganic phosphate. This Shigella dysenteriae serotype 1 (strain Sd197) protein is Pyridoxine 5'-phosphate synthase.